The sequence spans 1086 residues: Calcium-transporting ATPase 9, plasma membrane-type (1086 aa).

Over residues 1-15 (MSTSSSNGLLLTSMS) the composition is skewed to low complexity. The disordered stretch occupies residues 1 to 50 (MSTSSSNGLLLTSMSGRHDDMEAGSAKTEEHSDHEELQHDPDDPFDIDNT). Over 1-194 (MSTSSSNGLL…NTYPKKKGKN (194 aa)) the chain is Cytoplasmic. The span at 16–42 (GRHDDMEAGSAKTEEHSDHEELQHDPD) shows a compositional bias: basic and acidic residues. The tract at residues 57–68 (SLRRWRQAALVL) is interaction with calmodulin. Residues 195–215 (FFMFLWEAWQDLTLIILIIAA) form a helical membrane-spanning segment. Residues 216–233 (VTSLALGIKTEGLKEGWL) are Lumenal-facing. The helical transmembrane segment at 234–254 (DGGSIAFAVLLVIVVTAVSDY) threads the bilayer. The Cytoplasmic segment spans residues 255 to 382 (RQSLQFQNLN…GEETPLQVRL (128 aa)). The chain crosses the membrane as a helical span at residues 383-402 (NGLATFIGIVGLSVALVVLV). Topologically, residues 403 to 439 (ALLVRYFTGTTQDTNGATQFIKGTTSISDIVDDCVKI) are lumenal. The chain crosses the membrane as a helical span at residues 440–457 (FTIAVTIVVVAVPEGLPL). The Cytoplasmic portion of the chain corresponds to 458–857 (AVTLTLAYSM…RWGRSVYANI (400 aa)). Catalysis depends on Asp-495, which acts as the 4-aspartylphosphate intermediate. Asp-802 and Asp-806 together coordinate Mg(2+). The helical transmembrane segment at 858 to 876 (QKFIQFQLTVNVAALIINV) threads the bilayer. Residues 877 to 887 (VAAMSSGDVPL) lie on the Lumenal side of the membrane. A helical transmembrane segment spans residues 888–908 (KAVQLLWVNLIMDTLGALALA). The Cytoplasmic portion of the chain corresponds to 909–928 (TEPPTDHLMHRTPVGRREPL). A helical membrane pass occupies residues 929-951 (ITNIMWRNLLVQSFYQVAVLLVL). The Lumenal segment spans residues 952–963 (NFAGLSILGLNH). Residues 964–988 (ENHAHAVEVKNTMIFNAFVMCQIFN) form a helical membrane-spanning segment. The Cytoplasmic portion of the chain corresponds to 989-1006 (EFNARKPDEMNVFRGVNK). A helical membrane pass occupies residues 1007-1028 (NPLFVAIVGVTFILQIIIVTFL). The Lumenal portion of the chain corresponds to 1029-1038 (GKFAHTVRLG). The chain crosses the membrane as a helical span at residues 1039–1060 (WQLWLASIIIGLVSWPLAIVGK). The Cytoplasmic portion of the chain corresponds to 1061-1086 (LIPVPKTPMSVYFKKPFRKYKASRNA).

The protein belongs to the cation transport ATPase (P-type) (TC 3.A.3) family. Type IIB subfamily.

The protein localises to the membrane. It catalyses the reaction Ca(2+)(in) + ATP + H2O = Ca(2+)(out) + ADP + phosphate + H(+). Its activity is regulated as follows. Activated by calmodulin. This magnesium-dependent enzyme catalyzes the hydrolysis of ATP coupled with the translocation of calcium from the cytosol out of the cell or into organelles. The sequence is that of Calcium-transporting ATPase 9, plasma membrane-type (ACA9) from Arabidopsis thaliana (Mouse-ear cress).